Reading from the N-terminus, the 486-residue chain is Patatin-like phospholipase domain-containing protein 2 (486 aa).

Over 1-8 (MFPKETTW) the chain is Cytoplasmic. Residues 9 to 29 (NISFAGCGFLGVYHIGVASCL) form a helical membrane-spanning segment. The PNPLA domain occupies 10–179 (ISFAGCGFLG…SDNLPLYELK (170 aa)). Positions 14-19 (GCGFLG) match the GXGXXG motif. Residues 30–42 (REHAPFLVANATH) lie on the Extracellular side of the membrane. N-linked (GlcNAc...) asparagine glycosylation occurs at asparagine 39. A helical transmembrane segment spans residues 43 to 63 (IYGASAGALTATALVTGACLG). A GXSXG motif is present at residues 45–49 (GASAG). The Nucleophile role is filled by serine 47. At 64–137 (EAGANIIEVS…IITHFNSKEE (74 aa)) the chain is on the cytoplasmic side. Lysine 92 is covalently cross-linked (Glycyl lysine isopeptide (Lys-Gly) (interchain with G-Cter in ubiquitin)). A helical membrane pass occupies residues 138–158 (LIQANVCSTFIPVYCGLIPPS). The Extracellular segment spans residues 159 to 334 (LQGVRYVDGG…TTLSNMLPVR (176 aa)). The active-site Proton acceptor is the aspartate 166. A DGA/G motif is present at residues 166–168 (DGG). The helical transmembrane segment at 335–355 (LAMAMMVPYTLPLESAVSFTI) threads the bilayer. Residues 356-486 (RLLEWLPDVP…PQHPPSSPPC (131 aa)) are Cytoplasmic-facing. Residue serine 377 is modified to Phosphoserine; in vitro. A phosphoserine; by PKA mark is found at serine 399 and serine 409. Position 433 is a phosphoserine; in vitro (serine 433).

As to quaternary structure, interacts with ABHD5; this association stimulates PNPLA2 triglyceride hydrolase activity. Interacts with SERPINF1; this interaction stimulates the phospholipase A2 activity of PNPLA2. Despite a colocalization in lipid droplets, it probably does not interact with PLIN. Interacts with PLIN5; prevents interaction with ABHD5. Interacts with FAF2. In terms of processing, phosphorylation at Ser-409 by PKA is increased during fasting and moderate intensity exercise, and moderately increases lipolytic activity. Ubiquitinated by PEX2 in response to reactive oxygen species (ROS), leading to its degradation. Ubiquitination is stimulated by LDAH.

The protein localises to the lipid droplet. Its subcellular location is the cell membrane. The protein resides in the cytoplasm. It carries out the reaction a triacylglycerol + H2O = a diacylglycerol + a fatty acid + H(+). The catalysed reaction is a triacylglycerol + H2O = a 1,2-diacylglycerol + a fatty acid + H(+). It catalyses the reaction a triacylglycerol + H2O = a 1,3-diacylglycerol + a fatty acid + H(+). The enzyme catalyses a triacyl-sn-glycerol + H2O = a 1,3-diacyl-sn-glycerol + a fatty acid + H(+). It carries out the reaction a triacyl-sn-glycerol + H2O = a 2,3-diacyl-sn-glycerol + a fatty acid + H(+). The catalysed reaction is a 1-acylglycerol + a 1,3-diacylglycerol = a triacylglycerol + glycerol. It catalyses the reaction a 1-acylglycerol + a 1,2-diacylglycerol = a triacylglycerol + glycerol. The enzyme catalyses 2 a 1-acylglycerol = a 1,2-diacylglycerol + glycerol. It carries out the reaction a triacylglycerol + all-trans-retinol = an all-trans-retinyl ester + a diacylglycerol. The catalysed reaction is 1,2-di-(9Z-octadecenoyl)-glycerol + (9Z)-octadecenoate + H(+) = 1,2,3-tri-(9Z-octadecenoyl)-glycerol + H2O. It catalyses the reaction 1,2,3-tri-(9Z-octadecenoyl)-glycerol + H2O = 1,3-di-(9Z-octadecenoyl)-glycerol + (9Z)-octadecenoate + H(+). The enzyme catalyses 1-(9Z-octadecenoyl)-glycerol + 1,3-di-(9Z-octadecenoyl)-glycerol = 1,2,3-tri-(9Z-octadecenoyl)-glycerol + glycerol. It carries out the reaction 1-(9Z-octadecenoyl)-glycerol + 1,2-di-(9Z-octadecenoyl)-glycerol = 1,2,3-tri-(9Z-octadecenoyl)-glycerol + glycerol. The catalysed reaction is 2 1-(9Z-octadecenoyl)-glycerol = 1,2-di-(9Z-octadecenoyl)-glycerol + glycerol. It catalyses the reaction 1,2,3-tri-(9Z-octadecenoyl)-glycerol + all-trans-retinol = all-trans-retinyl 9Z-octadecenoate + di-(9Z)-octadecenoylglycerol. The enzyme catalyses 1,2,3-tri-(9Z)-hexadecenoylglycerol + H2O = 1,3-di-(9Z)-hexadecenoylglycerol + (9Z)-hexadecenoate + H(+). It carries out the reaction 1,2,3-tri-(9Z,12Z)-octadecadienoylglycerol + H2O = 1,3-di-(9Z,12Z)-octadecadienoylglycerol + (9Z,12Z)-octadecadienoate + H(+). The catalysed reaction is 1,2,3-tri-(9Z,12Z,15Z)-octadecatrienoylglycerol + H2O = 1,3-di-(9Z,12Z,15Z)-octadecatrienoylglycerol + (9Z,12Z,15Z)-octadecatrienoate + H(+). It catalyses the reaction 1,3-di-(9Z)-octadecenoyl-2-hexadecanoylglycerol + H2O = 1,3-di-(9Z-octadecenoyl)-glycerol + hexadecanoate + H(+). The enzyme catalyses 1,2-di-(9Z)-octadecenoyl-3-hexadecanoyl-sn-glycerol + H2O = 1-(9Z)-octadecenoyl-3-hexadecanoyl-sn-glycerol + (9Z)-octadecenoate + H(+). It carries out the reaction 1-hexadecanoyl-2,3-di-(9Z)-octadecenoyl-sn-glycerol + H2O = 1-hexadecanoyl-3-(9Z)-octadecenoyl-sn-glycerol + (9Z)-octadecenoate + H(+). The catalysed reaction is 1,2,3-tri-(9Z-octadecenoyl)-glycerol + H2O = 2,3-di-(9Z)-octadecenoyl-sn-glycerol + (9Z)-octadecenoate + H(+). It catalyses the reaction 1,2,3-tri-(9Z)-hexadecenoylglycerol + H2O = 2,3-di-(9Z)-hexadecenoyl-sn-glycerol + (9Z)-hexadecenoate + H(+). The enzyme catalyses 1,2,3-tri-(9Z,12Z)-octadecadienoylglycerol + H2O = 2,3-di-(9Z,12Z)-octadecadienoyl-sn-glycerol + (9Z,12Z)-octadecadienoate + H(+). It carries out the reaction 1,2,3-tri-(9Z,12Z,15Z)-octadecatrienoylglycerol + H2O = 2,3-di-(9Z,12Z,15Z)-octadecatrienoyl-sn-glycerol + (9Z,12Z,15Z)-octadecatrienoate + H(+). The catalysed reaction is 1,3-di-(9Z)-octadecenoyl-2-hexadecanoylglycerol + H2O = 2-hexadecanoyl-3-(9Z)-octadecenoyl-sn-glycerol + (9Z)-octadecenoate + H(+). It catalyses the reaction 1-hexadecanoyl-2,3-di-(9Z)-octadecenoyl-sn-glycerol + H2O = 2,3-di-(9Z)-octadecenoyl-sn-glycerol + hexadecanoate + H(+). The enzyme catalyses 1,2-di-(9Z)-octadecenoyl-3-hexadecanoyl-sn-glycerol + H2O = 2-(9Z-octadecenoyl)-3-hexadecanoyl-sn-glycerol + (9Z)-octadecenoate + H(+). It carries out the reaction a 1,2-diacyl-sn-glycero-3-phosphocholine + H2O = a 1-acyl-sn-glycero-3-phosphocholine + a fatty acid + H(+). The catalysed reaction is 1,2,3-tri-(9Z-octadecenoyl)-glycerol + 9-hydroxy-octadecanoate = 9-(9Z-octadecenoyloxy)-octadecanoate + 2,3-di-(9Z)-octadecenoyl-sn-glycerol. It catalyses the reaction 1-hexadecanoyl-2,3-di-(9Z)-octadecenoyl-sn-glycerol + 9-hydroxy-octadecanoate = 9-hexadecanoyloxy-octadecanoate + 2,3-di-(9Z)-octadecenoyl-sn-glycerol. The enzyme catalyses 1,2,3-tri-(10Z)-heptadecenoylglycerol + 9-hydroxy-octadecanoate = 2,3-di-(10Z-heptadecenoyl)-sn-glycerol + 9-(10Z-heptadecenoyloxy)-octadecanoate. It carries out the reaction 1,2,3-tri-(9Z,12Z)-octadecadienoylglycerol + 9-hydroxy-octadecanoate = 2,3-di-(9Z,12Z)-octadecadienoyl-sn-glycerol + 9-(9Z,12Z-octadecadienoyloxy)-octadecanoate. The catalysed reaction is 1,2,3-tri-(9Z)-hexadecenoylglycerol + 9-hydroxy-octadecanoate = 2,3-di-(9Z)-hexadecenoyl-sn-glycerol + 9-(9Z-hexadecenoyloxy)-octadecanoate. It catalyses the reaction 9-hydroxy-octadecanoate + 1,2-di-(9Z-octadecenoyl)-sn-glycerol = 9-(9Z-octadecenoyloxy)-octadecanoate + 2-(9Z-octadecenoyl)-glycerol. The enzyme catalyses 1-hexadecanoyl-2,3-di-(9Z)-octadecenoyl-sn-glycerol + 9-hydroxy-octadecanoate = 1-hexadecanoyl-3-(9Z)-octadecenoyl-sn-glycerol + 9-(9Z-octadecenoyloxy)-octadecanoate. It functions in the pathway glycerolipid metabolism; triacylglycerol degradation. In terms of biological role, catalyzes the initial step in triglyceride hydrolysis in adipocyte and non-adipocyte lipid droplets. Exhibits a strong preference for the hydrolysis of long-chain fatty acid esters at the sn-2 position of the glycerol backbone and acts coordinately with LIPE/HLS and DGAT2 within the lipolytic cascade. Also possesses acylglycerol transacylase and phospholipase A2 activities. Transfers fatty acid from triglyceride to retinol, hydrolyzes retinylesters, and generates 1,3-diacylglycerol from triglycerides. Regulates adiposome size and may be involved in the degradation of adiposomes. Catalyzes the formation of an ester bond between hydroxy fatty acids and fatty acids derived from triglycerides or diglycerides to generate fatty acid esters of hydroxy fatty acids (FAHFAs) in adipocytes. Acts antagonistically with LDAH in regulation of cellular lipid stores. Inhibits LDAH-stimulated lipid droplet fusion. May play an important role in energy homeostasis. May play a role in the response of the organism to starvation, enhancing hydrolysis of triglycerides and providing free fatty acids to other tissues to be oxidized in situations of energy depletion. This Bos taurus (Bovine) protein is Patatin-like phospholipase domain-containing protein 2 (PNPLA2).